Here is a 556-residue protein sequence, read N- to C-terminus: Secreted lipase 4 (556 aa).

The signal sequence occupies residues Met-1–Ala-21. Asn-46, Asn-263, Asn-305, Asn-411, and Asn-453 each carry an N-linked (GlcNAc...) asparagine glycan.

The protein belongs to the type-B carboxylesterase/lipase family.

The protein localises to the secreted. The enzyme catalyses a carboxylic ester + H2O = an alcohol + a carboxylate + H(+). Functionally, secreted lipase involved in plant virulence. Has a substrate preference for p-nitrophenyl esters with a carbon chain length of C12 (p-nitrophenyl laureate). The protein is Secreted lipase 4 of Gibberella zeae (strain ATCC MYA-4620 / CBS 123657 / FGSC 9075 / NRRL 31084 / PH-1) (Wheat head blight fungus).